A 3425-amino-acid polypeptide reads, in one-letter code: Genome polyprotein (3425 aa).

Residues 3 to 16 (NKKPGRPGSGRVVN) form an interaction with host EXOC1 region. The interval 38 to 73 (VLRGAGPIRFVLALLTFFKFTALRPTIGMLKRWKLV) is hydrophobic; homodimerization of capsid protein C. The propeptide at 105–120 (GGSCSWIIMLLPIVAG) is ER anchor for the capsid protein C, removed in mature form by serine protease NS3. Residues 105–125 (GGSCSWIIMLLPIVAGLKLGN) form a helical membrane-spanning segment. N-linked (GlcNAc...) asparagine; by host glycosylation occurs at N135. A run of 2 helical transmembrane segments spans residues 247–267 (WALR…NLGT) and 273–293 (IIFT…CLGM). 6 cysteine pairs are disulfide-bonded: C290/C317, C347/C403, C361/C392, C379/C408, C477/C575, and C592/C623. The segment at 385-398 (DRGWGNGCGLFGKG) is fusion peptide. 2 helical membrane passes run 740 to 760 (LFGG…LWMG) and 768 to 788 (ISMT…NVNA). C792 and C803 are joined by a disulfide. N918, N963, and N995 each carry an N-linked (GlcNAc...) asparagine; by host glycan. 4 disulfide bridges follow: C967–C1011, C1068–C1117, C1079–C1100, and C1101–C1104. A run of 7 helical transmembrane segments spans residues 1138-1158 (VMAF…VMIV), 1169-1189 (TAPI…FGGI), 1214-1234 (IVHL…IGFL), 1290-1310 (FALP…IDVV), 1337-1357 (MLLG…FAGL), 1369-1389 (WPVS…GGIA), and 1395-1415 (SMAI…VTGF). Residues 1421–1460 (LEKASDISWSEEARVTGASQRFDVEIDQDGNMRLLNDPGV) form an interacts with and activates NS3 protease region. Positions 1499-1676 (GGVIWDVPAP…EKKEEEVPQV (178 aa)) constitute a Peptidase S7 domain. Catalysis depends on charge relay system; for serine protease NS3 activity residues H1549, D1573, and S1633. Positions 1679 to 1835 (ENMLRKRQLT…DSNSPITDIE (157 aa)) constitute a Helicase ATP-binding domain. Residues 1683–1686 (RKRQ) form an important for RNA-binding region. 1692-1699 (LHPGSGKT) contacts ATP. The DEAH box motif lies at 1783–1786 (DEAH). The Helicase C-terminal domain maps to 1845 to 2011 (SGYEWITDFQ…GLVAQLYGPE (167 aa)). The regulates the ATPase activity of NS3 helicase stretch occupies residues 2162-2166 (EELPE). The next 8 membrane-spanning stretches (helical) occupy residues 2169 to 2189 (ETFL…LFFV), 2194 to 2214 (LGKT…LWIA), 2216 to 2236 (VPAQ…IVLI), 2252 to 2272 (VFMI…MGWL), 2306 to 2326 (AWAA…HLII), 2334 to 2354 (LMAM…MPFV), 2371 to 2391 (FTMT…AFLV), and 2441 to 2461 (CVLV…LTLT). Positions 2521 to 2786 (GGGTGRTLGE…DVDLGSGTRA (266 aa)) constitute an mRNA cap 0-1 NS5-type MT domain. Residue S2576 coordinates S-adenosyl-L-methionine. Phosphoserine is present on S2576. Residue K2581 is the For 2'-O-MTase activity of the active site. Residues G2606, W2607, T2624, K2625, and V2652 each contribute to the S-adenosyl-L-methionine site. The For 2'-O-MTase activity role is filled by D2666. I2667 contacts S-adenosyl-L-methionine. Catalysis depends on for 2'-O-MTase activity residues K2702 and E2738. Residue Y2740 participates in S-adenosyl-L-methionine binding. Zn(2+) is bound by residues E2960, H2964, C2969, and C2972. Positions 3050–3202 (GLMYADDTAG…KPADDRFATA (153 aa)) constitute a RdRp catalytic domain. Zn(2+) is bound by residues H3237, C3253, and C3372. A PDZ-binding motif is present at residues 3423–3425 (GVL).

It in the N-terminal section; belongs to the class I-like SAM-binding methyltransferase superfamily. mRNA cap 0-1 NS5-type methyltransferase family. In terms of assembly, homodimer. As to quaternary structure, forms heterodimers with envelope protein E in the endoplasmic reticulum and Golgi. Homodimer; in the endoplasmic reticulum and Golgi. Interacts with protein prM. Interacts with non-structural protein 1. In terms of assembly, homodimer; Homohexamer when secreted. Interacts with envelope protein E. NS1 interacts with NS4B. Interacts with host MAVS (via C-terminus); this interaction blocks the interaction of MAVS with RIGI or IFIH1/MDA5. As to quaternary structure, interacts (via N-terminus) with serine protease NS3. Forms a heterodimer with serine protease NS3. May form homooligomers. In terms of assembly, forms a heterodimer with NS2B. Interacts with non-structural protein 2A (via N-terminus). Interacts with NS4B. Interacts with unphosphorylated RNA-directed RNA polymerase NS5; this interaction stimulates RNA-directed RNA polymerase NS5 guanylyltransferase activity. As to quaternary structure, interacts with serine protease NS3. Homodimer. Specific enzymatic cleavages in vivo yield mature proteins. Cleavages in the lumen of endoplasmic reticulum are performed by host signal peptidase, whereas cleavages in the cytoplasmic side are performed by serine protease NS3. Signal cleavage at the 2K-4B site requires a prior NS3 protease-mediated cleavage at the 4A-2K site. Both NS2A and NS2B proteins are required in cis for NS2A/2B proteolytic processing. In terms of processing, cleaved in post-Golgi vesicles by a host furin, releasing the mature small envelope protein M, and peptide pr. This cleavage is incomplete as up to 30% of viral particles still carry uncleaved prM. Post-translationally, N-glycosylated. N-glycosylated. The excreted form is glycosylated and this is required for efficient secretion of the protein from infected cells. In terms of processing, phosphorylated on serines residues. This phosphorylation may trigger NS5 nuclear localization.

Its subcellular location is the virion. The protein resides in the host nucleus. It is found in the host cytoplasm. It localises to the host perinuclear region. The protein localises to the secreted. Its subcellular location is the virion membrane. The protein resides in the host endoplasmic reticulum membrane. The enzyme catalyses Selective hydrolysis of -Xaa-Xaa-|-Yaa- bonds in which each of the Xaa can be either Arg or Lys and Yaa can be either Ser or Ala.. It carries out the reaction RNA(n) + a ribonucleoside 5'-triphosphate = RNA(n+1) + diphosphate. It catalyses the reaction a ribonucleoside 5'-triphosphate + H2O = a ribonucleoside 5'-diphosphate + phosphate + H(+). The catalysed reaction is ATP + H2O = ADP + phosphate + H(+). The enzyme catalyses a 5'-end (5'-triphosphoguanosine)-ribonucleoside in mRNA + S-adenosyl-L-methionine = a 5'-end (N(7)-methyl 5'-triphosphoguanosine)-ribonucleoside in mRNA + S-adenosyl-L-homocysteine. It carries out the reaction a 5'-end (N(7)-methyl 5'-triphosphoguanosine)-ribonucleoside in mRNA + S-adenosyl-L-methionine = a 5'-end (N(7)-methyl 5'-triphosphoguanosine)-(2'-O-methyl-ribonucleoside) in mRNA + S-adenosyl-L-homocysteine + H(+). Functionally, capsid protein self-assembles to form an icosahedral capsid about 40 nm in diameter. Plays a role in virus budding by binding to the cell membrane and gathering the viral RNA into a nucleocapsid that forms the core of a mature virus particle. In terms of biological role, prevents premature fusion activity of envelope proteins in trans-Golgi by binding to envelope protein E at pH6.0. After virion release in extracellular space, gets dissociated from E dimers. Acts as a chaperone for envelope protein E during intracellular virion assembly by masking and inactivating envelope protein E fusion peptide. prM is the only viral peptide matured by host furin in the trans-Golgi network probably to avoid catastrophic activation of the viral fusion activity in acidic Golgi compartment prior to virion release. prM-E cleavage is inefficient, and many virions are only partially matured. These uncleaved prM would play a role in immune evasion. Its function is as follows. May play a role in virus budding. Exerts cytotoxic effects by activating a mitochondrial apoptotic pathway through M ectodomain. May display a viroporin activity. Functionally, binds to host cell surface receptor and mediates fusion between viral and cellular membranes. Envelope protein is synthesized in the endoplasmic reticulum in the form of heterodimer with protein prM. They play a role in virion budding in the ER, and the newly formed immature particle is covered with 60 spikes composed of heterodimer between precursor prM and envelope protein E. The virion is transported to the Golgi apparatus where the low pH causes dissociation of PrM-E heterodimers and formation of E homodimers. In terms of biological role, involved in immune evasion, pathogenesis and viral replication. Interacts with host MAVS and blocks MAVS binding to RIGI or IFIH1/MDA5, thereby leading to evasion of the innate immune response. Once cleaved off the polyprotein, is targeted to three destinations: the viral replication cycle, the plasma membrane and the extracellular compartment. Essential for viral replication. Required for formation of the replication complex and recruitment of other non-structural proteins to the ER-derived membrane structures. Excreted as a hexameric lipoparticle that plays a role against host immune response. Component of the viral RNA replication complex that functions in virion assembly. Its function is as follows. Required cofactor for the serine protease function of NS3. May have membrane-destabilizing activity and form viroporins. Functionally, displays three enzymatic activities: serine protease, NTPase and RNA helicase. NS3 serine protease, in association with NS2B, performs its autocleavage and cleaves the polyprotein at dibasic sites in the cytoplasm: C-prM, NS2A-NS2B, NS2B-NS3, NS3-NS4A, NS4A-2K and NS4B-NS5. NS3 RNA helicase binds RNA and unwinds dsRNA in the 3' to 5' direction. In terms of biological role, regulates the ATPase activity of the NS3 helicase activity. NS4A allows NS3 helicase to conserve energy during unwinding. Functions as a signal peptide for NS4B. Its function is as follows. Induces the formation of ER-derived membrane vesicles where the viral replication takes place. Functionally, replicates the viral (+) and (-) RNA genome, and performs the capping of genomes in the cytoplasm. NS5 methylates viral RNA cap at guanine N-7 and ribose 2'-O positions. This chain is Genome polyprotein, found in Anas (ducks).